The following is an 84-amino-acid chain: Acyl carrier protein (84 aa).

The Carrier domain occupies 4–79; it reads NEIFEKVQDI…EVVDFIKSKL (76 aa). Residue Ser39 is modified to O-(pantetheine 4'-phosphoryl)serine.

This sequence belongs to the acyl carrier protein (ACP) family. Post-translationally, 4'-phosphopantetheine is transferred from CoA to a specific serine of apo-ACP by AcpS. This modification is essential for activity because fatty acids are bound in thioester linkage to the sulfhydryl of the prosthetic group.

It is found in the plastid. The protein resides in the chloroplast. The protein operates within lipid metabolism; fatty acid biosynthesis. Its function is as follows. Carrier of the growing fatty acid chain in fatty acid biosynthesis. In Porphyra purpurea (Red seaweed), this protein is Acyl carrier protein.